We begin with the raw amino-acid sequence, 348 residues long: MIPATYTLSQITAQLGGEWRGEDISVTAVRPLADAQAEHISFLANPKYKAEVHDSSAGAVIVSAKAADGFEGRNLIVADDPYLYFAKVARLFSPVVKARGGIHPTAVVEPSATVPASCEIGANAYIGANTVLGEGCRILANAVVQHDCKLGDEVVLHPNAVVYYGCTLGRRVEIHSGAVIGADGFGLAFAGDSWFKIPQTGAVTLGDDVEIGSNTNIDRGAMSDTTVGNGTKIDNQVQIGHNCKIGSHTVIAAKTGISGSVTIGSYCIIGGGVGTVGHIEIADKTTIGGGTSVTHSITESGKHLAGIFPMSTHKEWARNAVYIHRLSEMNKRLKTLEQQLSDAGQDSK.

Histidine 241 acts as the Proton acceptor in catalysis.

This sequence belongs to the transferase hexapeptide repeat family. LpxD subfamily. In terms of assembly, homotrimer.

The enzyme catalyses a UDP-3-O-[(3R)-3-hydroxyacyl]-alpha-D-glucosamine + a (3R)-hydroxyacyl-[ACP] = a UDP-2-N,3-O-bis[(3R)-3-hydroxyacyl]-alpha-D-glucosamine + holo-[ACP] + H(+). Its pathway is bacterial outer membrane biogenesis; LPS lipid A biosynthesis. Functionally, catalyzes the N-acylation of UDP-3-O-acylglucosamine using 3-hydroxyacyl-ACP as the acyl donor. Is involved in the biosynthesis of lipid A, a phosphorylated glycolipid that anchors the lipopolysaccharide to the outer membrane of the cell. This chain is UDP-3-O-acylglucosamine N-acyltransferase, found in Neisseria meningitidis serogroup C (strain 053442).